We begin with the raw amino-acid sequence, 1018 residues long: MVSHFMGSLSVLCFLLLLGFQFVCPQPSTQHRKVPQRMAAEGAPEDDGGGGAPGVWGAWGPWSACSRSCSGGVMEQTRPCLPRSYRLRGGQRPGAPARAFADHVVSAVRTSVPLHRSRDETPALAGTDASRQGPTVLRGSRHPQPQGLEVTGDRRSRTRGTIGPGKYGYGKAPYILPLQTDTAHTPQRLRRQKLSSRHSRSQGASSARHGYSSPAHQVPQHGPLYQSDSGPRSGLQAAEAPIYQLPLTHDQGYPAASSLFHSPETSNNHGVGTHGATQSFSQPARSTAISCIGAYRQYKLCNTNVCPESSRSIREVQCASYNNKPFMGRFYEWEPFAEVKGNRKCELNCQAMGYRFYVRQAEKVIDGTPCDQNGTAICVSGQCKSIGCDDYLGSDKVVDKCGVCGGDNTGCQVVSGVFKHALTSLGYHRVVEIPEGATKINITEMYKSNNYLALRSRSGRSIINGNWAIDRPGKYEGGGTMFTYKRPNEISSTAGESFLAEGPTNEILDVYMIHQQPNPGVHYEYVIMGTNAISPQVPPHRRPGEPFNGQMVTEGRSQEEGEQKGRNEEKEDLRGEAPEMFTSESAQTFPVRHPDRFSPHRPDNLVPPAPQPPRRSRDHNWKQLGTTECSTTCGKGSQYPIFRCVHRSTHEEAPESYCDSSMKPTPEEEPCNIFPCPAFWDIGEWSECSKTCGLGMQHRQVLCRQVYANRSLTVQPYRCQHLEKPETTSTCQLKICSEWQIRTDWTSCSVPCGVGQRTRDVKCVSNIGDVVDDEECNMKLRPNDIENCDMGPCAKSWFLTEWSERCSAECGAGVRTRSVVCMTNHVSSLPLEGCGNNRPAEATPCDNGPCTGKVEWFAGSWSQCSIECGSGTQQREVICVRKNADTFEVLDPSECSFLEKPPSQQSCHLKPCGAKWFSTEWSMCSKSCQGGFRVREVRCLSDDMTLSNLCDPQLKPEERESCNPQDCVPEVDENCKDKYYNCNVVVQARLCVYNYYKTACCASCTRVANRQTGFLGSR.

Positions 1 to 25 (MVSHFMGSLSVLCFLLLLGFQFVCP) are cleaved as a signal peptide. The region spanning 53–307 (PGVWGAWGPW…YKLCNTNVCP (255 aa)) is the TSP type-1 1 domain. 3 disordered regions span residues 111 to 235 (SVPL…RSGL), 254 to 279 (PAAS…ATQS), and 534 to 623 (SPQV…NWKQ). Basic residues predominate over residues 187 to 200 (QRLRRQKLSSRHSR). A compositionally biased stretch (low complexity) spans 201 to 210 (SQGASSARHG). Polar residues predominate over residues 259 to 279 (LFHSPETSNNHGVGTHGATQS). 2 stretches are compositionally biased toward basic and acidic residues: residues 556–577 (RSQE…RGEA) and 592–603 (RHPDRFSPHRPD). 5 consecutive TSP type-1 domains span residues 676–737 (CPAF…KICS), 739–792 (WQIR…DMGP), 793–851 (CAKS…GPCT), 852–911 (GKVE…HLKP), and 912–968 (CGAK…QDCV). A PLAC domain is found at 971–1008 (VDENCKDKYYNCNVVVQARLCVYNYYKTACCASCTRVA).

In terms of assembly, interacts with FBN1. May interact with TGFB1.

Its subcellular location is the secreted. The protein localises to the extracellular space. It localises to the extracellular matrix. Promotes FBN1 matrix assembly. Attenuates TGFB signaling, possibly by accelerating the sequestration of large latent complexes of TGFB or active TGFB by FBN1 microfibril assembly, thereby negatively regulating the expression of TGFB regulatory targets, such as POSTN. The sequence is that of Thrombospondin type-1 domain-containing protein 4 (THSD4) from Homo sapiens (Human).